We begin with the raw amino-acid sequence, 238 residues long: Uridylate kinase (238 aa).

Position 12–15 (12–15 (KLSG)) interacts with ATP. Positions 20–25 (GEKGFG) are involved in allosteric activation by GTP. UMP is bound at residue G54. ATP contacts are provided by G55 and R59. UMP contacts are provided by residues D72 and 133–140 (TGNPYFST). ATP contacts are provided by Y166 and D169.

Belongs to the UMP kinase family. Homohexamer.

Its subcellular location is the cytoplasm. It catalyses the reaction UMP + ATP = UDP + ADP. It participates in pyrimidine metabolism; CTP biosynthesis via de novo pathway; UDP from UMP (UMPK route): step 1/1. With respect to regulation, allosterically activated by GTP. Inhibited by UTP. Functionally, catalyzes the reversible phosphorylation of UMP to UDP. This chain is Uridylate kinase, found in Clostridium botulinum (strain Hall / ATCC 3502 / NCTC 13319 / Type A).